Consider the following 504-residue polypeptide: Topoisomerase I damage affected protein 11 (504 aa).

A disordered region spans residues 32–62 (RKTGRKIRSASSNGYRLEHHRTSSAGSMHSQ). Residues 179–231 (ALLQSLATKELELLECKQKIEDLKKQTQHEEQNYTRRARELHELKEQVSKHLD) are a coiled coil. Thr236 is modified (phosphothreonine). A phosphoserine mark is found at Ser244 and Ser286. 3 disordered regions span residues 252–306 (LESR…SKQS), 332–377 (WDDS…SVSR), and 400–504 (DVIT…MTDF). The segment covering 257–287 (ENAGNSSLPSSVSKPKNMGHQSTNQSRSVSP) has biased composition (polar residues). Basic and acidic residues predominate over residues 290–301 (IQERRQRDDSSD). 2 stretches are compositionally biased toward polar residues: residues 332 to 359 (WDDS…QQYD) and 368 to 377 (KSPSQGSVSR). Positions 403–421 (TDNRCDPVYKSDRQHEQKK) are enriched in basic and acidic residues. The segment covering 470–479 (TREKKSKRSS) has biased composition (basic residues). Positions 491–504 (DNSSVKNSVEMTDF) are enriched in polar residues.

The protein belongs to the TDA11 family.

The protein localises to the cytoplasm. The protein is Topoisomerase I damage affected protein 11 (TDA11) of Saccharomyces cerevisiae (strain ATCC 204508 / S288c) (Baker's yeast).